The primary structure comprises 410 residues: MVLSQRQRDELNRAIADYLRSNGYEEAYSVFKKEAELDMNEELDKKYAGLLEKKWTSVIRLQKKVMELESKLNEAKEEFTSGGPLGQKRDPKEWIPRPPEKYALSGHRSPVTRVIFHPVFSVMVSASEDATIKVWDYETGDFERTLKGHTDSVQDISFDHSGKLLASCSADMTIKLWDFQGFECIRTMHGHDHNVSSVAIMPNGDHIVSASRDKTIKMWEVQTGYCVKTFTGHREWVRMVRPNQDGTLIASCSNDQTVRVWVVATKECKAELREHEHVVECISWAPESSYSSISEATGSETKKSGKPGPFLLSGSRDKTIKMWDVSTGMCLMTLVGHDNWVRGVLFHSGGKFILSCADDKTLRVWDYKNKRCMKTLNAHEHFVTSLDFHKTAPYVVTGFVDQTVKVWECR.

The tract at residues 1–38 is required for self-association and interaction with PAFAH1B2 and PAFAH1B3; it reads MVLSQRQRDELNRAIADYLRSNGYEEAYSVFKKEAELD. The interaction with NDE1 stretch occupies residues 1–66; that stretch reads MVLSQRQRDE…SVIRLQKKVM (66 aa). The tract at residues 1–102 is interaction with NDEL1; sequence MVLSQRQRDE…EWIPRPPEKY (102 aa). In terms of domain architecture, LisH spans 7–39; that stretch reads QRDELNRAIADYLRSNGYEEAYSVFKKEAELDM. An N6-acetyllysine modification is found at lysine 53. A coiled-coil region spans residues 56–82; the sequence is TSVIRLQKKVMELESKLNEAKEEFTSG. An interaction with dynein and dynactin region spans residues 83–410; that stretch reads GPLGQKRDPK…DQTVKVWECR (328 aa). WD repeat units lie at residues 106-147, 148-187, 190-229, 232-271, 274-333, 336-377, and 379-410; these read GHRS…RTLK, GHTD…CIRT, GHDH…CVKT, GHRE…CKAE, EHEH…CLMT, GHDN…KTLN, and HEHF…WECR. Phosphoserine is present on serine 109. The interaction with DCX stretch occupies residues 367-409; it reads YKNKRCMKTLNAHEHFVTSLDFHKTAPYVVTGFVDQTVKVWEC. An interaction with NDEL1 region spans residues 388-410; sequence FHKTAPYVVTGFVDQTVKVWECR.

This sequence belongs to the WD repeat LIS1/nudF family. Can self-associate. Component of the cytosolic PAF-AH (I) heterotetrameric enzyme, which is composed of PAFAH1B1 (beta), PAFAH1B2 (alpha2) and PAFAH1B3 (alpha1) subunits. The catalytic activity of the enzyme resides in the alpha1 (PAFAH1B3) and alpha2 (PAFAH1B2) subunits, whereas the beta subunit (PAFAH1B1) has regulatory activity. Trimer formation is not essential for the catalytic activity. Interacts with the catalytic dimer of PAF-AH (I) heterotetrameric enzyme: interacts with PAFAH1B2 homodimer (alpha2/alpha2 homodimer), PAFAH1B3 homodimer (alpha1/alpha1 homodimer) and PAFAH1B2-PAFAH1B3 heterodimer (alpha2/alpha1 heterodimer). Interacts with DCX, dynein, dynactin, IQGAP1, KATNB1, NDE1, NDEL1, NUDC and RSN. Interacts with DISC1, and this interaction is enhanced by NDEL1. Interacts with DAB1 when DAB1 is phosphorylated in response to RELN/reelin signaling. Interacts with INTS13. Interacts with DCDC1.

The protein resides in the cytoplasm. It is found in the cytoskeleton. It localises to the microtubule organizing center. The protein localises to the centrosome. Its subcellular location is the spindle. The protein resides in the nucleus membrane. In terms of biological role, regulatory subunit (beta subunit) of the cytosolic type I platelet-activating factor (PAF) acetylhydrolase (PAF-AH (I)), an enzyme that catalyzes the hydrolyze of the acetyl group at the sn-2 position of PAF and its analogs and participates in PAF inactivation. Regulates the PAF-AH (I) activity in a catalytic dimer composition-dependent manner. Positively regulates the activity of the minus-end directed microtubule motor protein dynein. May enhance dynein-mediated microtubule sliding by targeting dynein to the microtubule plus end. Required for several dynein- and microtubule-dependent processes such as the maintenance of Golgi integrity, the peripheral transport of microtubule fragments and the coupling of the nucleus and centrosome. Required during brain development for the proliferation of neuronal precursors and the migration of newly formed neurons from the ventricular/subventricular zone toward the cortical plate. Neuronal migration involves a process called nucleokinesis, whereby migrating cells extend an anterior process into which the nucleus subsequently translocates. During nucleokinesis dynein at the nuclear surface may translocate the nucleus towards the centrosome by exerting force on centrosomal microtubules. Also required for proper activation of Rho GTPases and actin polymerization at the leading edge of locomoting cerebellar neurons and postmigratory hippocampal neurons in response to calcium influx triggered via NMDA receptors. May also play a role in other forms of cell locomotion including the migration of fibroblasts during wound healing. Required for dynein recruitment to microtubule plus ends and BICD2-bound cargos. May modulate the Reelin pathway through interaction of the PAF-AH (I) catalytic dimer with VLDLR. This chain is Platelet-activating factor acetylhydrolase IB subunit alpha, found in Pan troglodytes (Chimpanzee).